The primary structure comprises 442 residues: Putative mannan endo-1,6-alpha-mannosidase C970.02 (442 aa).

An N-terminal signal peptide occupies residues 1-19 (MSLTIFISLATILFSFAEA). N-linked (GlcNAc...) asparagine glycosylation is found at asparagine 25, asparagine 82, asparagine 107, asparagine 131, asparagine 201, asparagine 236, asparagine 261, asparagine 264, asparagine 277, and asparagine 361.

This sequence belongs to the glycosyl hydrolase 76 family.

It carries out the reaction Random hydrolysis of (1-&gt;6)-alpha-D-mannosidic linkages in unbranched (1-&gt;6)-mannans.. The chain is Putative mannan endo-1,6-alpha-mannosidase C970.02 from Schizosaccharomyces pombe (strain 972 / ATCC 24843) (Fission yeast).